Here is a 626-residue protein sequence, read N- to C-terminus: Grainyhead-like protein 3 homolog (626 aa).

The tract at residues 30-95 (EAWKTYLENP…QGKRYYHGME (66 aa)) is transcription activation. A Grh/CP2 DB domain is found at 226–460 (SLKSDFEYTL…DLETPPVLFI (235 aa)).

Belongs to the grh/CP2 family. Grainyhead subfamily. Homodimer, also forms heterodimers with GRHL1 and GRHL2. Interacts with LMO4. Expressed in brain, colon, pancreas, placenta and kidney. Isoform 1 is expressed in lung and tonsil. Isoform 2 is prostate-specific.

It localises to the nucleus. Functionally, transcription factor playing important roles in primary neurulation and in the differentiation of stratified epithelia of both ectodermal and endodermal origin. Binds directly to the consensus DNA sequence 5'-AACCGGTT-3' acting as an activator and repressor on distinct target genes. xhibits functional redundancy with GRHL2 in epidermal morphogenetic events and epidermal wound repair. Exhibits functional redundancy with GRHL2 in epidermal morphogenetic events and epidermal wound repair but is essential to form the epidermal barrier with TGM3 as critical direct target gene among others. Despite being dispensable during normal epidermal homeostasis in the adulthood, is again required for barrier repair after immune-mediated epidermal damage, regulates distinct gene batteries in embryonic epidermal differentiation and adult epidermal barrier reformation after injury. Plays unique and cooperative roles with GRHL2 in establishing distinct zones of primary neurulation. Essential for spinal closure, functions cooperatively with GRHL2 in closure 2 (forebrain/midbrain boundary) and posterior neuropore closure. Also required for proper development of the oral periderm. No genetic interaction with GRHL3, no functional cooperativity due to diverse target gene selectivity. The chain is Grainyhead-like protein 3 homolog from Homo sapiens (Human).